Consider the following 872-residue polypeptide: Leucine--tRNA ligase (872 aa).

Residues 56-66 (PYPSGNLHMGH) carry the 'HIGH' region motif. A 'KMSKS' region motif is present at residues 629 to 633 (KMSKS). Lysine 632 serves as a coordination point for ATP.

The protein belongs to the class-I aminoacyl-tRNA synthetase family.

The protein resides in the cytoplasm. It carries out the reaction tRNA(Leu) + L-leucine + ATP = L-leucyl-tRNA(Leu) + AMP + diphosphate. This is Leucine--tRNA ligase from Prochlorococcus marinus (strain MIT 9211).